A 121-amino-acid polypeptide reads, in one-letter code: Ribosome-binding factor A (121 aa).

It belongs to the RbfA family. Monomer. Binds 30S ribosomal subunits, but not 50S ribosomal subunits or 70S ribosomes.

It is found in the cytoplasm. One of several proteins that assist in the late maturation steps of the functional core of the 30S ribosomal subunit. Associates with free 30S ribosomal subunits (but not with 30S subunits that are part of 70S ribosomes or polysomes). Required for efficient processing of 16S rRNA. May interact with the 5'-terminal helix region of 16S rRNA. This chain is Ribosome-binding factor A, found in Clostridium novyi (strain NT).